The chain runs to 597 residues: Aspartate--tRNA(Asp/Asn) ligase (597 aa).

Position 182 (Glu182) interacts with L-aspartate. The aspartate stretch occupies residues 206 to 209; that stretch reads QLFK. Arg228 provides a ligand contact to L-aspartate. Residues 228-230 and Gln237 contribute to the ATP site; that span reads RDE. An L-aspartate-binding site is contributed by His455. Glu489 contributes to the ATP binding site. Residue Arg496 participates in L-aspartate binding. Position 541 to 544 (541 to 544) interacts with ATP; sequence GFDR.

Belongs to the class-II aminoacyl-tRNA synthetase family. Type 1 subfamily. As to quaternary structure, homodimer.

It localises to the cytoplasm. The enzyme catalyses tRNA(Asx) + L-aspartate + ATP = L-aspartyl-tRNA(Asx) + AMP + diphosphate. Its function is as follows. Aspartyl-tRNA synthetase with relaxed tRNA specificity since it is able to aspartylate not only its cognate tRNA(Asp) but also tRNA(Asn). Reaction proceeds in two steps: L-aspartate is first activated by ATP to form Asp-AMP and then transferred to the acceptor end of tRNA(Asp/Asn). In Desulfosudis oleivorans (strain DSM 6200 / JCM 39069 / Hxd3) (Desulfococcus oleovorans), this protein is Aspartate--tRNA(Asp/Asn) ligase.